An 878-amino-acid chain; its full sequence is E3 ubiquitin-protein ligase BRE1-like 1 (878 aa).

Positions 1–21 (MASTGEPDRKRRHFSSISPSE) are disordered. 4 coiled-coil regions span residues 48 to 76 (QNLKLSQKLEAQQVECSILEDKLSQIKEK), 200 to 261 (QLAL…ELQQ), 293 to 382 (SDRE…EKLQ), and 537 to 624 (LDMY…ILKS). Residues 826-865 (CKACNDRPKEVVITKCYHLFCNPCVQKLTGTRQKKCPTCS) form an RING-type zinc finger.

The protein belongs to the BRE1 family. May act as a tetramer consisting of two copies of HUB1 and two copies of HUB2. Interacts with MED21. In terms of tissue distribution, ubiquitously expressed.

It localises to the nucleus. The catalysed reaction is S-ubiquitinyl-[E2 ubiquitin-conjugating enzyme]-L-cysteine + [acceptor protein]-L-lysine = [E2 ubiquitin-conjugating enzyme]-L-cysteine + N(6)-ubiquitinyl-[acceptor protein]-L-lysine.. It functions in the pathway protein modification; protein ubiquitination. Functionally, E3 ubiquitin-protein ligase that monoubiquitinates H2B to form H2BK143ub1. H2BK143ub1 gives a specific tag for epigenetic transcriptional activation and is also prerequisite for H3K4me and maybe H3K79me. It thereby plays a central role in histone code and gene regulation. Forms a ubiquitin ligase complex in cooperation with the E2 enzyme UBC2/RAD6. Required for the regulation of flowering time and defense against necrotrophic fungal pathogens. Involved in the control of seed dormancy and germination. This chain is E3 ubiquitin-protein ligase BRE1-like 1 (HUB1), found in Arabidopsis thaliana (Mouse-ear cress).